The primary structure comprises 299 residues: Taste receptor type 2 member 5 (299 aa).

Residue methionine 1 is a topological domain, extracellular. The helical transmembrane segment at 2-22 (LSAGLGLLMLVAVIEFLIGLI) threads the bilayer. The Cytoplasmic portion of the chain corresponds to 23-45 (GNGILVVWSLREWIRKFSWSSYN). The chain crosses the membrane as a helical span at residues 46–66 (LIILGLAGCRFLLQWLIILDL). Residues 67–82 (SLFPLFQSSSWLRYLN) lie on the Extracellular side of the membrane. Residues 83-103 (VFWVLVSQASLWFATFLSVFY) form a helical membrane-spanning segment. Over 104–127 (CKKITTFDRPAYLWLKQRAYNLSL) the chain is Cytoplasmic. Residues 128-148 (WCLLGYFIISLLLTVQVGLTV) traverse the membrane as a helical segment. Residues 149–175 (HHPPQGNSSIRYPFEHWQYLYVFQLNS) are Extracellular-facing. An N-linked (GlcNAc...) asparagine glycan is attached at asparagine 155. A helical transmembrane segment spans residues 176–196 (GSYLPLMVFLVSSGMLIISLY). The Cytoplasmic portion of the chain corresponds to 197–223 (THHKKMKVHSAGRRDARAKAHITALKS). A helical membrane pass occupies residues 224–244 (LGCFLLLHLVYIVASPFSITS). The Extracellular portion of the chain corresponds to 245–253 (KTYPPDLTS). Residues 254–274 (VFIWETLMAAYPSLHSLMLIM) form a helical membrane-spanning segment. Residues 275 to 299 (GIPRVKQTCQKILWKTVCARRCWGP) are Cytoplasmic-facing.

This sequence belongs to the G-protein coupled receptor T2R family.

The protein resides in the membrane. In terms of biological role, receptor that may play a role in the perception of bitterness and is gustducin-linked. May play a role in sensing the chemical composition of the gastrointestinal content. The activity of this receptor may stimulate alpha gustducin, mediate PLC-beta-2 activation and lead to the gating of TRPM5. This Papio hamadryas (Hamadryas baboon) protein is Taste receptor type 2 member 5 (TAS2R5).